A 353-amino-acid polypeptide reads, in one-letter code: Photosystem II D2 protein (353 aa).

Position 2 is an N-acetylthreonine (T2). T2 is modified (phosphothreonine). A helical transmembrane segment spans residues 41-61 (CAYFALGGWFTGTTFVTSWYT). A chlorophyll a-binding site is contributed by H118. A helical membrane pass occupies residues 125–141 (GFMLRQFELARSVQLRP). Residues Q130 and N143 each coordinate pheophytin a. The helical transmembrane segment at 153 to 166 (VFVSVFLIYPLGQS) threads the bilayer. H198 lines the chlorophyll a pocket. A helical membrane pass occupies residues 208 to 228 (AALLCAIHGATVENTLFEDGD). The a plastoquinone site is built by H215 and F262. H215 is a binding site for Fe cation. H269 provides a ligand contact to Fe cation. A helical membrane pass occupies residues 279-295 (GLWMSALGVVGLALNLR).

It belongs to the reaction center PufL/M/PsbA/D family. PSII is composed of 1 copy each of membrane proteins PsbA, PsbB, PsbC, PsbD, PsbE, PsbF, PsbH, PsbI, PsbJ, PsbK, PsbL, PsbM, PsbT, PsbX, PsbY, PsbZ, Psb30/Ycf12, at least 3 peripheral proteins of the oxygen-evolving complex and a large number of cofactors. It forms dimeric complexes. The D1/D2 heterodimer binds P680, chlorophylls that are the primary electron donor of PSII, and subsequent electron acceptors. It shares a non-heme iron and each subunit binds pheophytin, quinone, additional chlorophylls, carotenoids and lipids. There is also a Cl(-1) ion associated with D1 and D2, which is required for oxygen evolution. The PSII complex binds additional chlorophylls, carotenoids and specific lipids. is required as a cofactor.

It is found in the plastid. It localises to the chloroplast thylakoid membrane. The catalysed reaction is 2 a plastoquinone + 4 hnu + 2 H2O = 2 a plastoquinol + O2. Functionally, photosystem II (PSII) is a light-driven water:plastoquinone oxidoreductase that uses light energy to abstract electrons from H(2)O, generating O(2) and a proton gradient subsequently used for ATP formation. It consists of a core antenna complex that captures photons, and an electron transfer chain that converts photonic excitation into a charge separation. The D1/D2 (PsbA/PsbD) reaction center heterodimer binds P680, the primary electron donor of PSII as well as several subsequent electron acceptors. D2 is needed for assembly of a stable PSII complex. The sequence is that of Photosystem II D2 protein from Glycine max (Soybean).